The sequence spans 115 residues: MNLMLALLTNFTLATLLVIIAFWLPQLNVYSEKTSPYECGFDPMGSARLPFSMKFFLVAITFLLFDLEIALLLPLPWASQTTNLNTMLTMALFLIILLAVSLAYEWTQKGLEWTE.

The next 3 membrane-spanning stretches (helical) occupy residues 3–23 (LMLALLTNFTLATLLVIIAFW), 55–75 (FFLVAITFLLFDLEIALLLPL), and 84–104 (LNTMLTMALFLIILLAVSLAY).

The protein belongs to the complex I subunit 3 family. As to quaternary structure, core subunit of respiratory chain NADH dehydrogenase (Complex I) which is composed of 45 different subunits. Interacts with TMEM186. Interacts with TMEM242.

Its subcellular location is the mitochondrion inner membrane. It catalyses the reaction a ubiquinone + NADH + 5 H(+)(in) = a ubiquinol + NAD(+) + 4 H(+)(out). In terms of biological role, core subunit of the mitochondrial membrane respiratory chain NADH dehydrogenase (Complex I) which catalyzes electron transfer from NADH through the respiratory chain, using ubiquinone as an electron acceptor. Essential for the catalytic activity of complex I. This is NADH-ubiquinone oxidoreductase chain 3 from Bos indicus (Zebu).